Consider the following 640-residue polypeptide: Threonine--tRNA ligase (640 aa).

The TGS domain maps to 1–61; it reads MPTITLPDGS…DSDATLQIIT (61 aa). The segment at 242-533 is catalytic; the sequence is DHRKIGKRLG…LIEHYEGAFP (292 aa). Cys333, His384, and His510 together coordinate Zn(2+).

The protein belongs to the class-II aminoacyl-tRNA synthetase family. Homodimer. Zn(2+) serves as cofactor.

It is found in the cytoplasm. It carries out the reaction tRNA(Thr) + L-threonine + ATP = L-threonyl-tRNA(Thr) + AMP + diphosphate + H(+). In terms of biological role, catalyzes the attachment of threonine to tRNA(Thr) in a two-step reaction: L-threonine is first activated by ATP to form Thr-AMP and then transferred to the acceptor end of tRNA(Thr). Also edits incorrectly charged L-seryl-tRNA(Thr). This chain is Threonine--tRNA ligase, found in Pseudomonas fluorescens (strain Pf0-1).